The following is a 189-amino-acid chain: Probable hydrogen peroxide-inducible genes activator (189 aa).

The 58-residue stretch at 8–65 (PTLAGLRAFAAVAEKQHFGSAASALGVNQSTLSQALAGLESGLGVRLIERSTRRVFLT) folds into the HTH lysR-type domain. A DNA-binding region (H-T-H motif) is located at residues 25 to 44 (FGSAASALGVNQSTLSQALA).

The protein belongs to the LysR transcriptional regulatory family.

Its function is as follows. Required for the induction the katG gene for catalase. Involved in the response to hydrogen peroxide. In Mycobacterium xenopi, this protein is Probable hydrogen peroxide-inducible genes activator (oxyR).